Consider the following 366-residue polypeptide: Histidinol-phosphate aminotransferase 2 (366 aa).

The span at 1–11 shows a compositional bias: polar residues; that stretch reads MQVKDQLSSLQ. The tract at residues 1–21 is disordered; the sequence is MQVKDQLSSLQPYKPGKSPEQ. Lys222 is modified (N6-(pyridoxal phosphate)lysine).

This sequence belongs to the class-II pyridoxal-phosphate-dependent aminotransferase family. Histidinol-phosphate aminotransferase subfamily. In terms of assembly, homodimer. Requires pyridoxal 5'-phosphate as cofactor.

The catalysed reaction is L-histidinol phosphate + 2-oxoglutarate = 3-(imidazol-4-yl)-2-oxopropyl phosphate + L-glutamate. It functions in the pathway amino-acid biosynthesis; L-histidine biosynthesis; L-histidine from 5-phospho-alpha-D-ribose 1-diphosphate: step 7/9. The polypeptide is Histidinol-phosphate aminotransferase 2 (Bacillus cereus (strain ATCC 10987 / NRS 248)).